Consider the following 154-residue polypeptide: Large ribosomal subunit protein uL13 (154 aa).

This sequence belongs to the universal ribosomal protein uL13 family. In terms of assembly, part of the 50S ribosomal subunit.

Functionally, this protein is one of the early assembly proteins of the 50S ribosomal subunit, although it is not seen to bind rRNA by itself. It is important during the early stages of 50S assembly. In Rhodopseudomonas palustris (strain ATCC BAA-98 / CGA009), this protein is Large ribosomal subunit protein uL13.